The chain runs to 83 residues: High-potential iron-sulfur protein (83 aa).

Cys43, Cys46, Cys61, and Cys75 together coordinate [4Fe-4S] cluster.

The protein belongs to the high-potential iron-sulfur protein (HiPIP) family. As to quaternary structure, homodimer.

Its subcellular location is the periplasm. Functionally, specific class of high-redox-potential 4Fe-4S ferredoxins. Functions in anaerobic electron transport in most purple and in some other photosynthetic bacteria and in at least one genus (Paracoccus) of halophilic, denitrifying bacteria. In Marichromatium gracile (Chromatium gracile), this protein is High-potential iron-sulfur protein (hip).